The sequence spans 235 residues: Carboxy-S-adenosyl-L-methionine synthase (235 aa).

S-adenosyl-L-methionine is bound by residues Tyr-35, 60–62 (GCS), 83–84 (DN), Asn-124, and Arg-191.

It belongs to the class I-like SAM-binding methyltransferase superfamily. Cx-SAM synthase family. In terms of assembly, homodimer.

The enzyme catalyses prephenate + S-adenosyl-L-methionine = carboxy-S-adenosyl-L-methionine + 3-phenylpyruvate + H2O. In terms of biological role, catalyzes the conversion of S-adenosyl-L-methionine (SAM) to carboxy-S-adenosyl-L-methionine (Cx-SAM). The chain is Carboxy-S-adenosyl-L-methionine synthase from Campylobacter jejuni subsp. doylei (strain ATCC BAA-1458 / RM4099 / 269.97).